The sequence spans 2388 residues: Spectrin beta chain, non-erythrocytic 2 (2388 aa).

Serine 2 bears the N-acetylserine mark. The interval serine 2–histidine 278 is actin-binding. Residues serine 6 and serine 31 each carry the phosphoserine modification. Calponin-homology (CH) domains lie at alanine 57 to glutamine 161 and lysine 176 to serine 281. Spectrin repeat units follow at residues leucine 306–arginine 414, alanine 427–leucine 527, glutamate 532–glutamate 639, arginine 642–alanine 744, leucine 749–glutamate 849, and threonine 856–leucine 954. At serine 959 the chain carries Phosphoserine. Spectrin repeat units follow at residues isoleucine 960–glutamate 1063, arginine 1066–alanine 1169, phenylalanine 1174–alanine 1266, glutamate 1279–leucine 1379, arginine 1384–glutamine 1485, glutamate 1489–glutamate 1586, arginine 1589–glutamate 1692, leucine 1696–leucine 1797, tyrosine 1801–leucine 1904, phenylalanine 1910–glutamine 2010, and valine 2017–leucine 2078. A Phosphoserine modification is found at serine 1073. Serine 1574 bears the Phosphoserine mark. Residues glutamate 2080–lysine 2096 are compositionally biased toward basic and acidic residues. Disordered regions lie at residues glutamate 2080 to leucine 2112 and aspartate 2124 to threonine 2207. A compositionally biased stretch (polar residues) spans aspartate 2124–valine 2163. Serine 2169 and serine 2199 each carry phosphoserine. A PH domain is found at glutamine 2218–alanine 2328. The interval alanine 2333 to lysine 2388 is disordered. Threonine 2354 bears the Phosphothreonine mark. Serine 2359 is modified (phosphoserine). The span at arginine 2368–phenylalanine 2381 shows a compositional bias: basic and acidic residues.

It belongs to the spectrin family. In terms of tissue distribution, abundantly transcribed in the brain. Neurons are the predominant cell-type to express the gene. Found abundantly in Purkinje cells.

The protein resides in the cytoplasm. It localises to the cytoskeleton. Its subcellular location is the cell cortex. Probably plays an important role in neuronal membrane skeleton. The polypeptide is Spectrin beta chain, non-erythrocytic 2 (Sptbn2) (Rattus norvegicus (Rat)).